Here is a 421-residue protein sequence, read N- to C-terminus: 26S proteasome non-ATPase regulatory subunit 11A (421 aa).

The 165-residue stretch at 227–391 (AYSYFYEAFE…GVLIVFDEPP (165 aa)) folds into the PCI domain.

Belongs to the proteasome subunit S9 family. As to quaternary structure, component of the lid subcomplex of the 19S proteasome regulatory particle complex (also named PA700 complex). The 26S proteasome consists of a 20S proteasome core and two 19S regulatory subunits.

It is found in the nucleus. The protein resides in the cytoplasm. The protein localises to the cytosol. Component of the lid subcomplex of the 26S proteasome, a multiprotein complex involved in the ATP-dependent degradation of ubiquitinated proteins. In the complex, psmd11a is required for proteasome assembly. The protein is 26S proteasome non-ATPase regulatory subunit 11A (psmd11a) of Danio rerio (Zebrafish).